A 366-amino-acid chain; its full sequence is Alanine racemase (366 aa).

Lysine 33 serves as the catalytic Proton acceptor; specific for D-alanine. Lysine 33 carries the post-translational modification N6-(pyridoxal phosphate)lysine. Arginine 129 contacts substrate. The active-site Proton acceptor; specific for L-alanine is the tyrosine 253. Residue methionine 301 participates in substrate binding.

This sequence belongs to the alanine racemase family. Pyridoxal 5'-phosphate is required as a cofactor.

It carries out the reaction L-alanine = D-alanine. It participates in amino-acid biosynthesis; D-alanine biosynthesis; D-alanine from L-alanine: step 1/1. Its function is as follows. Catalyzes the interconversion of L-alanine and D-alanine. May also act on other amino acids. The sequence is that of Alanine racemase (alr) from Xanthomonas oryzae pv. oryzae (strain MAFF 311018).